Reading from the N-terminus, the 485-residue chain is Sulfate adenylyltransferase subunit 1 (485 aa).

The 216-residue stretch at 17–232 (KDLLRLLTAG…LETVHIDNDH (216 aa)) folds into the tr-type G domain. The G1 stretch occupies residues 26 to 33 (GSVDDGKS). 26–33 (GSVDDGKS) is a GTP binding site. The interval 84–88 (GITID) is G2. Positions 105–108 (DTPG) are G3. GTP-binding positions include 105–109 (DTPGH) and 160–163 (NKMD). The interval 160 to 163 (NKMD) is G4. Residues 197 to 199 (SAL) form a G5 region.

It belongs to the TRAFAC class translation factor GTPase superfamily. Classic translation factor GTPase family. CysN/NodQ subfamily. Heterodimer composed of CysD, the smaller subunit, and CysN.

The enzyme catalyses sulfate + ATP + H(+) = adenosine 5'-phosphosulfate + diphosphate. Its pathway is sulfur metabolism; hydrogen sulfide biosynthesis; sulfite from sulfate: step 1/3. Functionally, with CysD forms the ATP sulfurylase (ATPS) that catalyzes the adenylation of sulfate producing adenosine 5'-phosphosulfate (APS) and diphosphate, the first enzymatic step in sulfur assimilation pathway. APS synthesis involves the formation of a high-energy phosphoric-sulfuric acid anhydride bond driven by GTP hydrolysis by CysN coupled to ATP hydrolysis by CysD. This is Sulfate adenylyltransferase subunit 1 from Bacteroides thetaiotaomicron (strain ATCC 29148 / DSM 2079 / JCM 5827 / CCUG 10774 / NCTC 10582 / VPI-5482 / E50).